Here is a 417-residue protein sequence, read N- to C-terminus: Serine--tRNA ligase (417 aa).

226 to 228 contributes to the L-serine binding site; that stretch reads TSE. ATP is bound by residues 257–259 and Val-273; that span reads RRE. Glu-280 serves as a coordination point for L-serine. 344-347 serves as a coordination point for ATP; it reads EVTS. Residue Thr-379 participates in L-serine binding.

This sequence belongs to the class-II aminoacyl-tRNA synthetase family. Type-1 seryl-tRNA synthetase subfamily. As to quaternary structure, homodimer. The tRNA molecule binds across the dimer.

The protein localises to the cytoplasm. The catalysed reaction is tRNA(Ser) + L-serine + ATP = L-seryl-tRNA(Ser) + AMP + diphosphate + H(+). The enzyme catalyses tRNA(Sec) + L-serine + ATP = L-seryl-tRNA(Sec) + AMP + diphosphate + H(+). Its pathway is aminoacyl-tRNA biosynthesis; selenocysteinyl-tRNA(Sec) biosynthesis; L-seryl-tRNA(Sec) from L-serine and tRNA(Sec): step 1/1. Its function is as follows. Catalyzes the attachment of serine to tRNA(Ser). Is also able to aminoacylate tRNA(Sec) with serine, to form the misacylated tRNA L-seryl-tRNA(Sec), which will be further converted into selenocysteinyl-tRNA(Sec). The polypeptide is Serine--tRNA ligase (Tropheryma whipplei (strain Twist) (Whipple's bacillus)).